Here is an 81-residue protein sequence, read N- to C-terminus: Protein Vpu (81 aa).

Residues 1–7 (MSYLLAI) are Extracellular-facing. The helical transmembrane segment at 8 to 28 (GIAALIVALIIAIVVWTIVYI) threads the bilayer. The Cytoplasmic segment spans residues 29-81 (EYKKLVRQRKINKLYKRIRERAEDSGNESEGDAEELAALGEMGPFIPGDINNL). Phosphoserine; by host CK2 occurs at positions 53 and 57.

Belongs to the HIV-1 VPU protein family. As to quaternary structure, homopentamer. Interacts with host CD4 and BRTC; these interactions induce proteasomal degradation of CD4. Interacts with host BST2; this interaction leads to the degradation of host BST2. Interacts with host FBXW11. Interacts with host AP1M1; this interaction plays a role in the mistrafficking and subsequent degradation of host BST2. Interacts with host RANBP2; this interaction allows Vpu to down-regulate host BLM sumoylation. Phosphorylated by host CK2. This phosphorylation is necessary for interaction with human BTRC and degradation of CD4.

It localises to the host membrane. With respect to regulation, ion channel activity is inhibited by hexamethylene amiloride in vitro. Enhances virion budding by targeting host CD4 and Tetherin/BST2 to proteasome degradation. Degradation of CD4 prevents any unwanted premature interactions between viral Env and its host receptor CD4 in the endoplasmic reticulum. Degradation of antiretroviral protein Tetherin/BST2 is important for virion budding, as BST2 tethers new viral particles to the host cell membrane. Mechanistically, Vpu bridges either CD4 or BST2 to BTRC, a substrate recognition subunit of the Skp1/Cullin/F-box protein E3 ubiquitin ligase, induces their ubiquitination and subsequent proteasomal degradation. The alteration of the E3 ligase specificity by Vpu seems to promote the degradation of host IKBKB, leading to NF-kappa-B down-regulation and subsequent apoptosis. Acts as a viroporin that forms an oligomeric ion channel in membranes. Modulates the host DNA repair mechanisms to promote degradation of nuclear viral cDNA in cells that are already productively infected in order to suppress immune sensing and proviral hyper-integration (superinfection). Manipulates PML-NBs and modulates SUMOylation of host BLM protein thereby enhancing its DNA-end processing activity toward viral unintegrated linear DNA. Also inhibits RAD52-mediated homologous repair of viral cDNA, preventing the generation of dead-end circular forms of single copies of the long terminal repeat and permitting sustained nucleolytic attack. In Homo sapiens (Human), this protein is Protein Vpu.